The following is a 493-amino-acid chain: Vacuolar-processing enzyme (493 aa).

The signal sequence occupies residues 1–19 (MGSSQLSTLLFFTIVVTFL). N-linked (GlcNAc...) asparagine glycosylation occurs at N147. H174 is an active-site residue. C216 (nucleophile) is an active-site residue. An intrachain disulfide couples C249 to C263. Residues N295 and N331 are each glycosylated (N-linked (GlcNAc...) asparagine). Cystine bridges form between C429–C459 and C441–C476.

It belongs to the peptidase C13 family.

In terms of biological role, asparagine-specific endopeptidase involved in the processing of vacuolar seed protein precursors into the mature forms. This is Vacuolar-processing enzyme from Vicia sativa (Spring vetch).